The following is a 136-amino-acid chain: Protein PsiE (136 aa).

Transmembrane regions (helical) follow at residues 15–35 (ILQT…VVFL), 55–75 (YELV…ALIV), 82–102 (FHFP…RLII), and 108–128 (PLDV…LWLC).

Belongs to the PsiE family.

It is found in the cell inner membrane. This chain is Protein PsiE, found in Escherichia coli (strain UTI89 / UPEC).